Here is a 920-residue protein sequence, read N- to C-terminus: Urea transporter 2 (920 aa).

The interval 25–57 (FTSPSWPSTSPDTHPALPLLEMPEEKDLRSSNE) is disordered. Over residues 26–39 (TSPSWPSTSPDTHP) the composition is skewed to low complexity. A compositionally biased stretch (basic and acidic residues) spans 47–57 (PEEKDLRSSNE). The next 9 membrane-spanning stretches (helical) occupy residues 151 to 170 (WWTI…ALAL), 176 to 196 (AIAS…MAVF), 204 to 224 (WWLL…SSAL), 233 to 253 (LPVF…ATGH), 272 to 291 (ITWT…VGVG), 302 to 322 (GGVF…HAAI), 346 to 366 (WSYN…ALTW), 370 to 390 (LLAL…SNIM), and 392 to 412 (VVGV…FLLL). Residues 446 to 467 (EKAPSGGGGEHPPTAGPKVEEG) are disordered. S477 carries the phosphoserine modification. The next 4 membrane-spanning stretches (helical) occupy residues 600-620 (GILI…SGCL), 638-658 (AIAA…MAVF), 666-686 (WWLL…SSAL), and 695-715 (LPVF…ATGH). An N-linked (GlcNAc...) asparagine glycan is attached at N733. 4 helical membrane passes run 764–784 (GGIF…HAAI), 803–823 (IYFG…GGMF), 832–852 (LLAI…ANML), and 854–874 (VFGL…FLLL).

It belongs to the urea transporter family. As to quaternary structure, interacts with SNAPIN which enhances its urea transport activity. In terms of tissue distribution, epressed in the inner medulla of the kidney (at protein level). As to expression, expressed in the kidney.

The protein localises to the apical cell membrane. It is found in the cell membrane. The catalysed reaction is urea(in) = urea(out). Its activity is regulated as follows. Inhibited by phloretin. In terms of biological role, mediates the transport of urea driven by a concentration gradient across the cell membrane of the renal inner medullary collecting duct which is critical to the urinary concentrating mechanism. Functionally, mediates the transport of urea driven by a concentration gradient across the cell membrane of the kidney inner medullary collecting duct which is critical to the urinary concentrating mechanism. The polypeptide is Urea transporter 2 (SLC14A2) (Homo sapiens (Human)).